A 269-amino-acid chain; its full sequence is Shikimate dehydrogenase (NADP(+)) (269 aa).

Shikimate contacts are provided by residues S17–S19 and T64. K68 (proton acceptor) is an active-site residue. Residue D80 participates in NADP(+) binding. Residues N89 and D105 each contribute to the shikimate site. NADP(+)-binding positions include G130 to A134, N154 to K159, and M213. Y215 serves as a coordination point for shikimate. Residue G237 coordinates NADP(+).

The protein belongs to the shikimate dehydrogenase family. As to quaternary structure, homodimer.

The enzyme catalyses shikimate + NADP(+) = 3-dehydroshikimate + NADPH + H(+). It participates in metabolic intermediate biosynthesis; chorismate biosynthesis; chorismate from D-erythrose 4-phosphate and phosphoenolpyruvate: step 4/7. Involved in the biosynthesis of the chorismate, which leads to the biosynthesis of aromatic amino acids. Catalyzes the reversible NADPH linked reduction of 3-dehydroshikimate (DHSA) to yield shikimate (SA). This chain is Shikimate dehydrogenase (NADP(+)), found in Neisseria meningitidis serogroup C (strain 053442).